Here is a 166-residue protein sequence, read N- to C-terminus: Transcription antitermination protein NusB (166 aa).

Basic and acidic residues predominate over residues 1–15 (MISDDSDRFNPRDPK). Positions 1–30 (MISDDSDRFNPRDPKPANAGKPSKSAKRRE) are disordered.

It belongs to the NusB family.

Its function is as follows. Involved in transcription antitermination. Required for transcription of ribosomal RNA (rRNA) genes. Binds specifically to the boxA antiterminator sequence of the ribosomal RNA (rrn) operons. This chain is Transcription antitermination protein NusB, found in Pseudomonas fluorescens (strain ATCC BAA-477 / NRRL B-23932 / Pf-5).